Reading from the N-terminus, the 179-residue chain is Large ribosomal subunit protein uL5 (179 aa).

The protein belongs to the universal ribosomal protein uL5 family. As to quaternary structure, part of the 50S ribosomal subunit; part of the 5S rRNA/L5/L18/L25 subcomplex. Contacts the 5S rRNA and the P site tRNA. Forms a bridge to the 30S subunit in the 70S ribosome.

Its function is as follows. This is one of the proteins that bind and probably mediate the attachment of the 5S RNA into the large ribosomal subunit, where it forms part of the central protuberance. In the 70S ribosome it contacts protein S13 of the 30S subunit (bridge B1b), connecting the 2 subunits; this bridge is implicated in subunit movement. Contacts the P site tRNA; the 5S rRNA and some of its associated proteins might help stabilize positioning of ribosome-bound tRNAs. The sequence is that of Large ribosomal subunit protein uL5 from Syntrophus aciditrophicus (strain SB).